A 126-amino-acid chain; its full sequence is Fluoride-specific ion channel FluC (126 aa).

4 helical membrane passes run 4-24, 36-56, 67-85, and 101-121; these read LLLVCLGGALGSGARYLTSAW, GTLLVNVSGSFLLAGIMTASL, LFLAAGVMGGFTTYSSFNY, and AYLLATVLGCLAAAFAATLLV. Positions 75 and 78 each coordinate Na(+).

This sequence belongs to the fluoride channel Fluc/FEX (TC 1.A.43) family.

Its subcellular location is the cell inner membrane. The enzyme catalyses fluoride(in) = fluoride(out). With respect to regulation, na(+) is not transported, but it plays an essential structural role and its presence is essential for fluoride channel function. In terms of biological role, fluoride-specific ion channel. Important for reducing fluoride concentration in the cell, thus reducing its toxicity. The polypeptide is Fluoride-specific ion channel FluC (Anaeromyxobacter dehalogenans (strain 2CP-1 / ATCC BAA-258)).